An 820-amino-acid chain; its full sequence is MDLSSLPDPLRPTHSRLPARRRDRAEPPRFEQRALARLAAWMVCGLPLAALAQTDPGPGATAEPAPALRSSPLLQEKIPEDARPKLPIFVRGDHVSGQPDINATVEGNAELRRGDTIIHADRLDYAVPDDLAKARGNVRINRAGNVYEGSVLELQVDAFSGFFDDASYRFLANGAYGDARRVDFIDRDRALVHEATYTTCQKNDESTWKPAWIVRARSIKIDNAEQVGTAEGGVLEFQGVPILPVPGSFTFPLSDKRKTGLLPPTVGIDSVSGVVYSQPYYWNIAPNRDATITPMVMSKRGVSTSGEFRYLEPTYSGELRGDYMPSDRLRNRDRWALGLKHRGVFDTGIGGIGLNVDATRVSDDNYWRDFSTRTNGGISQLTQRLLPADATLFWGANDMSLSLRTLKWQTLQDVNARIVPPYDRMPQIHWGYMPSSLPGGFDGSVEADYTDFRADRALTGQPNARRSYAMAQFSRPFLAPAGFITPRLQFHATQYDFDSALPSTGRRTASRVLPTFSLDSGLVFERDARYFGRNFLQTLEPRAFYTYTPFRDQSMIPVYDTAANDFNFATIYTENGYSGSDRIADNNLLTLGVTTRLLDPEDGGEAARFGIAQRLRFSDQKVVMPGEAPVSERLSDVLVGAGINWTRQWGFDSTVQYNPKTSRSIRSTIGARYNPSDYRVINAAYRFQRGTSEQIDVGWQWPINDLWGDKGQNLGPGRGQGGGRWYSVGRLNYSLQDRKLVDTVIGFEYDSCCWIGRVVLERLQSSVTTATTRLLFQIEFVGFSRLSLGSDPIQTLKQNIPRYQYLREPVPPPSRFTNYD.

The segment at methionine 1–proline 27 is disordered. Over residues threonine 13–arginine 22 the composition is skewed to basic residues.

This sequence belongs to the LptD family. Component of the lipopolysaccharide transport and assembly complex. Interacts with LptE and LptA.

In terms of biological role, together with LptE, is involved in the assembly of lipopolysaccharide (LPS) at the surface of the outer membrane. This is LPS-assembly protein LptD from Paracidovorax citrulli (strain AAC00-1) (Acidovorax citrulli).